We begin with the raw amino-acid sequence, 526 residues long: Cytochrome P450 monooxygeanse terK (526 aa).

Residues 21–43 (NWGQLTGALLFLAACTWIYLPAF) form a helical membrane-spanning segment. C465 contributes to the heme binding site.

It belongs to the cytochrome P450 family. Heme is required as a cofactor.

It is found in the membrane. It participates in secondary metabolite biosynthesis. Cytochrome P450 monooxygeanse; part of the gene cluster that mediates the biosynthesis of terpendoles, indole-diterpene (IDT) mycotoxins including terpendole I, terpendole K, terpendole C, as well as the kinesin Eg5 inhibitor terpendole E. Terpendoles biosynthesis begins with the synthesis of geranylgeranyl diphosphate (GGPP) by a yet unidentified GGPP synthase. Condensation of indole-3-glycerol phosphate with GGPP by the prenyltransferase terC then forms 3-geranylgeranylindole (3-GGI), followed by epoxidation and cyclization of this intermediate (by the FAD-dependent monooxygeanse terM and the terpene cyclase terB) to form paspaline. The cytochrome monooxygenase terQ then hydroxylates paspalline at C-11 to yield terpendole E. The cytochrome monooxygenase terP converts terpendole E to 13-desoxyterpendole I, and terQ converts 13-desoxyterpendole I into terpendole I. TerF and terK are required for conversion of terpendole I to terpendole C which is further converted to terpendole K. The sequence is that of Cytochrome P450 monooxygeanse terK from Tolypocladium album (Soil fungus).